Reading from the N-terminus, the 509-residue chain is Maturase K (509 aa).

The protein belongs to the intron maturase 2 family. MatK subfamily.

It is found in the plastid. Its subcellular location is the chloroplast. Its function is as follows. Usually encoded in the trnK tRNA gene intron. Probably assists in splicing its own and other chloroplast group II introns. The protein is Maturase K of Dalea purpurea (Violet prairie clover).